We begin with the raw amino-acid sequence, 245 residues long: Probable proteasome subunit alpha type-2 (245 aa).

It belongs to the peptidase T1A family. In terms of assembly, the 26S proteasome consists of a 20S proteasome core and two 19S regulatory subunits. The 20S proteasome core is composed of 28 subunits that are arranged in four stacked rings, resulting in a barrel-shaped structure. The two end rings are each formed by seven alpha subunits, and the two central rings are each formed by seven beta subunits. The catalytic chamber with the active sites is on the inside of the barrel.

The protein resides in the cytoplasm. It is found in the nucleus. In terms of biological role, the proteasome is a multicatalytic proteinase complex which is characterized by its ability to cleave peptides with Arg, Phe, Tyr, Leu, and Glu adjacent to the leaving group at neutral or slightly basic pH. The proteasome has an ATP-dependent proteolytic activity. In Schizosaccharomyces pombe (strain 972 / ATCC 24843) (Fission yeast), this protein is Probable proteasome subunit alpha type-2 (pre8).